The following is a 349-amino-acid chain: Anthranilate phosphoribosyltransferase (349 aa).

Residues glycine 81, 84-85 (GD), threonine 89, 91-94 (NVST), 109-117 (KHGNRAASS), and alanine 121 each bind 5-phospho-alpha-D-ribose 1-diphosphate. Glycine 81 is a binding site for anthranilate. Serine 93 lines the Mg(2+) pocket. Asparagine 112 serves as a coordination point for anthranilate. Arginine 167 lines the anthranilate pocket. 2 residues coordinate Mg(2+): aspartate 226 and glutamate 227.

It belongs to the anthranilate phosphoribosyltransferase family. In terms of assembly, homodimer. Mg(2+) serves as cofactor.

It catalyses the reaction N-(5-phospho-beta-D-ribosyl)anthranilate + diphosphate = 5-phospho-alpha-D-ribose 1-diphosphate + anthranilate. It participates in amino-acid biosynthesis; L-tryptophan biosynthesis; L-tryptophan from chorismate: step 2/5. Catalyzes the transfer of the phosphoribosyl group of 5-phosphorylribose-1-pyrophosphate (PRPP) to anthranilate to yield N-(5'-phosphoribosyl)-anthranilate (PRA). The protein is Anthranilate phosphoribosyltransferase of Methylocella silvestris (strain DSM 15510 / CIP 108128 / LMG 27833 / NCIMB 13906 / BL2).